Reading from the N-terminus, the 958-residue chain is Dermatan-sulfate epimerase (958 aa).

An N-terminal signal peptide occupies residues 1–22 (MRTHTRGAPSVFFICLFCFVSA). Over 23 to 902 (CVTDENPEVM…APALSASYTR (880 aa)) the chain is Lumenal. An N-linked (GlcNAc...) asparagine glycan is attached at N183. H205 functions as the Proton donor in the catalytic mechanism. Residue Y261 is part of the active site. N336 and N411 each carry an N-linked (GlcNAc...) asparagine glycan. Residues H452 and E470 each contribute to the Mn(2+) site. Y473 is a catalytic residue. N481 lines the Mn(2+) pocket. 2 N-linked (GlcNAc...) asparagine glycosylation sites follow: N642 and N648. The chain crosses the membrane as a helical span at residues 903-923 (LFLILNIAIFFVMLAMQLTYF). The Cytoplasmic segment spans residues 924–933 (QRAQSLHGQR). A helical membrane pass occupies residues 934–954 (CLYAVLLIDSCILLWLYSSCS). The Lumenal segment spans residues 955–958 (QSQC).

This sequence belongs to the dermatan-sulfate isomerase family. It depends on Mn(2+) as a cofactor. In terms of processing, N-glycosylated. Glycosylation is important for enzymatic activity.

The protein localises to the endoplasmic reticulum membrane. The protein resides in the golgi apparatus membrane. It is found in the cytoplasmic vesicle membrane. It localises to the microsome membrane. The catalysed reaction is chondroitin 4'-sulfate = dermatan 4'-sulfate. It functions in the pathway glycan metabolism; chondroitin sulfate biosynthesis. Its pathway is glycan metabolism; heparan sulfate biosynthesis. Converts D-glucuronic acid to L-iduronic acid (IdoUA) residues. Plays an important role in the biosynthesis of the glycosaminoglycan/mucopolysaccharide dermatan sulfate. This chain is Dermatan-sulfate epimerase (DSE), found in Bos taurus (Bovine).